A 264-amino-acid chain; its full sequence is Thiazole synthase (264 aa).

The active-site Schiff-base intermediate with DXP is the lysine 106. Residues glycine 167, 193 to 194, and 215 to 216 each bind 1-deoxy-D-xylulose 5-phosphate; these read AG and NS.

The protein belongs to the ThiG family. In terms of assembly, homotetramer. Forms heterodimers with either ThiH or ThiS.

The protein localises to the cytoplasm. It catalyses the reaction [ThiS sulfur-carrier protein]-C-terminal-Gly-aminoethanethioate + 2-iminoacetate + 1-deoxy-D-xylulose 5-phosphate = [ThiS sulfur-carrier protein]-C-terminal Gly-Gly + 2-[(2R,5Z)-2-carboxy-4-methylthiazol-5(2H)-ylidene]ethyl phosphate + 2 H2O + H(+). It functions in the pathway cofactor biosynthesis; thiamine diphosphate biosynthesis. Functionally, catalyzes the rearrangement of 1-deoxy-D-xylulose 5-phosphate (DXP) to produce the thiazole phosphate moiety of thiamine. Sulfur is provided by the thiocarboxylate moiety of the carrier protein ThiS. In vitro, sulfur can be provided by H(2)S. This is Thiazole synthase from Stutzerimonas stutzeri (strain A1501) (Pseudomonas stutzeri).